Here is a 150-residue protein sequence, read N- to C-terminus: MSGSMATAEASGSDGKGQEVETSVTYYRLEEVAKRNSLKELWLVIHGRVYDVTRFLNEHPGGEEVLLEQAGVDASESFEDVGHSSDAREMLKQYYIGDIHPSDLKPESGSKDPSKNDTCKSCWAYWILPIIGAVLLGFLYRYYTSESKSS.

The propeptide occupies 1–15 (MSGSMATAEASGSDG). The interval 1 to 20 (MSGSMATAEASGSDGKGQEV) is disordered. Ser-23 is modified (phosphoserine). Residues 24–100 (VTYYRLEEVA…LKQYYIGDIH (77 aa)) form the Cytochrome b5 heme-binding domain. Lys-34 bears the N6-acetyllysine mark. Phosphoserine is present on Ser-37. An N6-methyllysine modification is found at Lys-39. Heme contacts are provided by His-59 and His-83. Position 84 is a phosphoserine (Ser-84). A helical membrane pass occupies residues 123 to 140 (WAYWILPIIGAVLLGFLY).

This sequence belongs to the cytochrome b5 family. Component of a complex composed of cytochrome b5, NADH-cytochrome b5 reductase (CYB5R3) and MTARC2.

Its subcellular location is the mitochondrion outer membrane. Functionally, cytochrome b5 is a membrane-bound hemoprotein functioning as an electron carrier for several membrane-bound oxygenases. This is Cytochrome b5 type B (CYB5B) from Homo sapiens (Human).